The sequence spans 420 residues: MSSETVSYFSHPFPRRQSVGVSVGGVIVGGSAPVVVQSMTNTDTADVDSTVAQVAALHRAGSEIVRITVDRDESAAAVPKIRERLERLGHDVPLVGDFHYIGHKLLADHPACAEALSKYRINPGNVGFKDKKDKQFADIVEMAIRYDKPVRIGVNWGSLDQELLTALMDRNQAEGAPLSAQDVMREAIVQSALISANLAEEIGLGRDKIILSAKVSQVQDLIAVYTMLAQRSNHALHLGLTEAGMGTKGIVASSAAMGILLQQGIGDTIRISLTPEPGGDRTREVQVAQELLQTMGFRQFVPIVAACPGCGRTTSTVFQELAQTIQEDIRRNMPLWREKYPGVEALSVAVMGCIVNGPGESKHADIGISLPGTGETPSAPVFVDGKKVTTLRGPGIAEDFQKMVADYIENRFGLGRKIAS.

The [4Fe-4S] cluster site is built by Cys307, Cys310, Cys353, and Glu360.

It belongs to the IspG family. The cofactor is [4Fe-4S] cluster.

It catalyses the reaction (2E)-4-hydroxy-3-methylbut-2-enyl diphosphate + oxidized [flavodoxin] + H2O + 2 H(+) = 2-C-methyl-D-erythritol 2,4-cyclic diphosphate + reduced [flavodoxin]. It participates in isoprenoid biosynthesis; isopentenyl diphosphate biosynthesis via DXP pathway; isopentenyl diphosphate from 1-deoxy-D-xylulose 5-phosphate: step 5/6. Functionally, converts 2C-methyl-D-erythritol 2,4-cyclodiphosphate (ME-2,4cPP) into 1-hydroxy-2-methyl-2-(E)-butenyl 4-diphosphate. The polypeptide is 4-hydroxy-3-methylbut-2-en-1-yl diphosphate synthase (flavodoxin) (Brucella abortus (strain S19)).